We begin with the raw amino-acid sequence, 304 residues long: Bifunctional protein FolD (304 aa).

Residues 176-178, isoleucine 201, and isoleucine 242 contribute to the NADP(+) site; that span reads GAS.

It belongs to the tetrahydrofolate dehydrogenase/cyclohydrolase family. Homodimer.

The enzyme catalyses (6R)-5,10-methylene-5,6,7,8-tetrahydrofolate + NADP(+) = (6R)-5,10-methenyltetrahydrofolate + NADPH. The catalysed reaction is (6R)-5,10-methenyltetrahydrofolate + H2O = (6R)-10-formyltetrahydrofolate + H(+). Its pathway is one-carbon metabolism; tetrahydrofolate interconversion. Its function is as follows. Catalyzes the oxidation of 5,10-methylenetetrahydrofolate to 5,10-methenyltetrahydrofolate and then the hydrolysis of 5,10-methenyltetrahydrofolate to 10-formyltetrahydrofolate. The chain is Bifunctional protein FolD from Gluconobacter oxydans (strain 621H) (Gluconobacter suboxydans).